Reading from the N-terminus, the 447-residue chain is MKPVIALVGRPNVGKSTLFNRLTKSRDAIVADFAGLTRDRHYGNGRQGKHEYIVIDTGGFEPDASSGIYREMARQTQQAVAEADVVVFVVDVRGGLSAQDHDIANYLRRLGKPCVLAGNKAEGMQDSMHLAEFYELGLGEVHPVSAAHGQGVRSLVDLALKPLALPEIEEEDAAAEKNVIRLAVAGRPNVGKSTLINTWLGEERLVAFDMPGTTRDAISVPFERNGQKFELIDTAGLRRKGKVFEAIEKFSVVKTLQAIESANVVLLLLDATQGVTDQDAHIAGYILESGRAVVIAVNKWDAVDDYGRQQLERSIETCLSFLKFAPLHFISAKKRQGIGPLWSSIIQAYKSANRKMPTPVLTRLLQEAVQFQSPKRSGMFRPKMRYAHQGGMNPPVIVIHGNSLEHVTDAYKRFLEARFRKEFDLVGTPLRIEMKTSSNPYTDKQNS.

EngA-type G domains are found at residues 3-167 (PVIA…ALPE) and 180-353 (IRLA…KSAN). GTP contacts are provided by residues 9-16 (GRPNVGKS), 56-60 (DTGGF), 119-122 (NKAE), 186-193 (GRPNVGKS), 233-237 (DTAGL), and 298-301 (NKWD). A KH-like domain is found at 354–438 (RKMPTPVLTR…PLRIEMKTSS (85 aa)).

This sequence belongs to the TRAFAC class TrmE-Era-EngA-EngB-Septin-like GTPase superfamily. EngA (Der) GTPase family. Associates with the 50S ribosomal subunit.

In terms of biological role, GTPase that plays an essential role in the late steps of ribosome biogenesis. The protein is GTPase Der of Acidovorax sp. (strain JS42).